The following is a 237-amino-acid chain: tRNA(His) guanylyltransferase (237 aa).

The Mg(2+) site is built by aspartate 29, glycine 30, and aspartate 77. GTP-binding positions include 29–34 and 76–77; these read DGKHFH and SD.

It belongs to the tRNA(His) guanylyltransferase family. It depends on Mg(2+) as a cofactor.

It carries out the reaction a 5'-end ribonucleotide-tRNA(His) + GTP + ATP + H2O = a 5'-end phospho-guanosine-ribonucleotide-tRNA(His) + AMP + 2 diphosphate + H(+). Adds a GMP to the 5'-end of tRNA(His) after transcription and RNase P cleavage. The chain is tRNA(His) guanylyltransferase (THG1) from Eremothecium gossypii (strain ATCC 10895 / CBS 109.51 / FGSC 9923 / NRRL Y-1056) (Yeast).